The following is a 481-amino-acid chain: Amino acid permease 6 (481 aa).

Residues 1-36 (MEKKKSMFVEQSFPEHEIGDTNKNFDEDGRDKRTGT) lie on the Cytoplasmic side of the membrane. Transmembrane regions (helical) follow at residues 37–57 (WMTGSAHIITAVIGSGVLSLA) and 58–78 (WAIAQLGWVAGPAVLMAFSFI). Residues 79-125 (TYFTSTMLADCYRSPDPVTGKRNYTYMEVVRSYLGGRKVQLCGLAQY) are Cytoplasmic-facing. A helical membrane pass occupies residues 126–146 (GNLIGITIGYTITASISMVAV). The Extracellular segment spans residues 147-167 (KRSNCFHKNGHNVKCATSNTP). A helical membrane pass occupies residues 168-188 (FMIIFAIIQIILSQIPNFHNL). Residues 189 to 190 (SW) lie on the Cytoplasmic side of the membrane. Residues 191–211 (LSILAAVMSFCYASIGVGLSI) form a helical membrane-spanning segment. Over 212-242 (AKAAGGGEHVRTTLTGVTVGIDVSGAEKIWR) the chain is Extracellular. Residues 243-263 (TFQAIGDIAFAYAYSTVLIEI) traverse the membrane as a helical segment. Residues 264 to 283 (QDTLKAGPPSENKAMKRASL) are Cytoplasmic-facing. The helical transmembrane segment at 284–304 (VGVSTTTFFYMLCGCVGYAAF) threads the bilayer. The Extracellular segment spans residues 305-321 (GNDAPGNFLTGFGFYEP). Residues 322–342 (FWLIDFANVCIAVHLIGAYQV) traverse the membrane as a helical segment. Topologically, residues 343-385 (FCQPIFQFVESQSAKRWPDNKFITGEYKIHVPCCGDFSINFLR) are cytoplasmic. Residues 386 to 405 (LVWRTSYVVVTAVVAMIFPF) traverse the membrane as a helical segment. Topologically, residues 406-408 (FND) are extracellular. Residues 409-427 (FLGLIGAASFWPLTVYFPI) traverse the membrane as a helical segment. Over 428–447 (EMHIAQKKIPKFSFTWTWLK) the chain is Cytoplasmic. The chain crosses the membrane as a helical span at residues 448 to 468 (ILSWTCFIVSLVAAAGSVQGL). Topologically, residues 469–481 (IQSLKDFKPFQAP) are extracellular.

The protein belongs to the amino acid/polyamine transporter 2 family. Amino acid/auxin permease (AAAP) (TC 2.A.18.2) subfamily. As to expression, expressed in roots and leaves, and at lower levels in stems and flowers. Found in the xylem parenchyma.

The protein localises to the cell membrane. Functionally, amino acid-proton symporter. Stereospecific transporter with a broad specificity for tryptophan, proline, and neutral and acidic amino acids. Has an affinity for aspartate in a physiological range. Involved in the uptake of amino acids diffusing out of the xylem tracheids into the xylem parenchyma. In Arabidopsis thaliana (Mouse-ear cress), this protein is Amino acid permease 6 (AAP6).